The sequence spans 728 residues: E3 ubiquitin-protein ligase LNX (728 aa).

The RING-type zinc finger occupies 45 to 83 (CHICLQALLDPLDTPCGHTYCTLCLTNFLVEKDFCPVDR). The NPXY motif motif lies at 185–188 (NPAY). The segment at 185–220 (NPAYVSSVEDGEPVANSSDSGRSNRTRARPFERSTM) is disordered. The interaction with MAGEB18 stretch occupies residues 186-244 (PAYVSSVEDGEPVANSSDSGRSNRTRARPFERSTMRSRSFKKINRALSALRRTKSGSVV). 2 consecutive PDZ domains span residues 278 to 362 (SIKI…VLRE) and 385 to 467 (HVIL…VSRQ). Ser-445 is modified (phosphoserine). The segment at 481-500 (WISNGQQSPGPGERNTASKP) is disordered. PDZ domains follow at residues 508–593 (VVSV…ALEV) and 638–723 (DVIL…IASW).

In terms of assembly, interacts with CXADR. Interacts with MAGEB18 and MAGEF1. Interacts with the phosphotyrosine interaction domain of all isoforms of NUMB. IGSF5/JAM4 interacts with isoform 2 through the second PDZ domain, other isoforms may also interact with IGSF5/JAM4. As to expression, isoform 1 and isoform 2 are expressed in the heart. Isoform 1 is also expressed in kidney, lung and skeletal muscle while isoform 2 is also expressed in brain.

It localises to the cytoplasm. It catalyses the reaction S-ubiquitinyl-[E2 ubiquitin-conjugating enzyme]-L-cysteine + [acceptor protein]-L-lysine = [E2 ubiquitin-conjugating enzyme]-L-cysteine + N(6)-ubiquitinyl-[acceptor protein]-L-lysine.. It participates in protein modification; protein ubiquitination. Functionally, E3 ubiquitin-protein ligase that mediates ubiquitination and subsequent proteasomal degradation of NUMB. E3 ubiquitin ligases accept ubiquitin from an E2 ubiquitin-conjugating enzyme in the form of a thioester and then directly transfers the ubiquitin to targeted substrates. Mediates ubiquitination of isoform p66 and isoform p72 of NUMB, but not that of isoform p71 or isoform p65. Isoform 2 provides an endocytic scaffold for IGSF5/JAM4. This Mus musculus (Mouse) protein is E3 ubiquitin-protein ligase LNX (Lnx1).